The chain runs to 282 residues: Pantothenate synthetase (282 aa).

30–37 (MGYLHEGH) is a binding site for ATP. Histidine 37 serves as the catalytic Proton donor. Position 61 (glutamine 61) interacts with (R)-pantoate. Glutamine 61 serves as a coordination point for beta-alanine. 147–150 (GMKD) provides a ligand contact to ATP. Position 153 (glutamine 153) interacts with (R)-pantoate. ATP is bound by residues valine 176 and 184–187 (KSSR).

It belongs to the pantothenate synthetase family. As to quaternary structure, homodimer.

The protein localises to the cytoplasm. It carries out the reaction (R)-pantoate + beta-alanine + ATP = (R)-pantothenate + AMP + diphosphate + H(+). The protein operates within cofactor biosynthesis; (R)-pantothenate biosynthesis; (R)-pantothenate from (R)-pantoate and beta-alanine: step 1/1. Functionally, catalyzes the condensation of pantoate with beta-alanine in an ATP-dependent reaction via a pantoyl-adenylate intermediate. In Bacillus cereus (strain G9842), this protein is Pantothenate synthetase.